The chain runs to 156 residues: Small ribosomal subunit protein uS7 (156 aa).

Belongs to the universal ribosomal protein uS7 family. Part of the 30S ribosomal subunit. Contacts proteins S9 and S11.

Its function is as follows. One of the primary rRNA binding proteins, it binds directly to 16S rRNA where it nucleates assembly of the head domain of the 30S subunit. Is located at the subunit interface close to the decoding center, probably blocks exit of the E-site tRNA. The protein is Small ribosomal subunit protein uS7 of Bifidobacterium longum (strain NCC 2705).